The primary structure comprises 332 residues: Adenine deaminase (332 aa).

Residues histidine 16, histidine 18, and histidine 196 each coordinate Zn(2+). Glutamate 199 serves as the catalytic Proton donor. Aspartate 277 contacts Zn(2+). Residue aspartate 278 coordinates substrate.

It belongs to the metallo-dependent hydrolases superfamily. Adenosine and AMP deaminases family. Adenine deaminase type 2 subfamily. Zn(2+) serves as cofactor.

It carries out the reaction adenine + H2O + H(+) = hypoxanthine + NH4(+). In terms of biological role, catalyzes the hydrolytic deamination of adenine to hypoxanthine. Plays an important role in the purine salvage pathway and in nitrogen catabolism. The sequence is that of Adenine deaminase from Acinetobacter baylyi (strain ATCC 33305 / BD413 / ADP1).